Reading from the N-terminus, the 210-residue chain is Transposable element activator uncharacterized 23 kDa protein (210 aa).

A compositionally biased stretch (basic and acidic residues) spans S67–R78. Positions S67 to G87 are disordered.

The chain is Transposable element activator uncharacterized 23 kDa protein from Zea mays (Maize).